A 415-amino-acid chain; its full sequence is Amylovoran biosynthesis protein AmsJ (415 aa).

It belongs to the polysaccharide pyruvyl transferase family.

It participates in glycan metabolism; exopolysaccharide biosynthesis. Its function is as follows. Involved in the biosynthesis of amylovoran which functions as a virulence factor. The polypeptide is Amylovoran biosynthesis protein AmsJ (amsJ) (Erwinia amylovora (Fire blight bacteria)).